A 433-amino-acid polypeptide reads, in one-letter code: Pyroglutamylated RF-amide peptide receptor (433 aa).

Over 1–46 (MQALNITAEQFSRLLSAHNLTREQFIHRYGLRPLVYTPELPARAKV) the chain is Extracellular. Residues asparagine 5 and asparagine 19 are each glycosylated (N-linked (GlcNAc...) asparagine). The helical transmembrane segment at 47 to 67 (AFALAGALIFALALFGNSLVI) threads the bilayer. Residues 68-81 (YVVTRSKAMRTVTN) lie on the Cytoplasmic side of the membrane. The helical transmembrane segment at 82 to 102 (IFICSLALSDLLIAFFCIPVT) threads the bilayer. Residues 103 to 120 (MLQNISDKWLGGAFICKM) lie on the Extracellular side of the membrane. A helical transmembrane segment spans residues 121 to 141 (VPFVQSTAVVTEILTMTCIAV). The Cytoplasmic segment spans residues 142 to 162 (ERHQGLVHPFKMKWQYTTRRA). The helical transmembrane segment at 163-183 (FTILGVVWLAAIIVGSPMWHV) threads the bilayer. Over 184-212 (QRLEIKYDFLYEKEHICCLEEWASPVHQR) the chain is Extracellular. Residues 213–233 (IYSTFILVILFLLPLVVMLVL) form a helical membrane-spanning segment. Residues 234–271 (YSKIGYELWIKKRVGDSSALQTIHGKEMSKIARKKKRA) are Cytoplasmic-facing. The helical transmembrane segment at 272–292 (VIMMVTVVALFAACWAPFHVV) threads the bilayer. Topologically, residues 293-313 (HMMVEYSNFEKEYDDVTIKMV) are extracellular. The chain crosses the membrane as a helical span at residues 314 to 334 (FAVAQTIGFFNSICNPFVYAF). The Cytoplasmic segment spans residues 335–433 (MNENFKKNFL…NSTFGSGHEL (99 aa)). A disordered region spans residues 356-389 (SSPARKPGNSGISMMQKRAKLSRPQRPVEETKGD).

It belongs to the G-protein coupled receptor 1 family. Highly expressed in the adrenal gland and at moderate levels in the eye and testis. Expressed widely in the brain with high levels in the hypothalamus and moderate levels in the amygdala, basal forebrain, cortex, medulla oblongata, midbrain and thalamus.

It localises to the cell membrane. Its function is as follows. Receptor for the orexigenic neuropeptide QRFP. The activity of this receptor is mediated by G proteins that modulate adenylate cyclase activity and intracellular calcium levels. This Rattus norvegicus (Rat) protein is Pyroglutamylated RF-amide peptide receptor (Qrfpr).